The chain runs to 209 residues: MNIDNASNWDPQALGLVPMVVEQSGRGERAYDIYSRLLKERVIFLVGPVNDVTANLVVAQLLFLEAENPDKDIYFYINSPGGSVTAGMSIYDTMQFIKPDVSTLCIGQAASMGAFLLNAGAKGKRFALPNSRVMIHQPLGGFQGQASDIAIHAKEILSIRDRLNRIMAEHSGQPLERIEKDTDRDNFLSAAEAAEYGLIDKVLTRRDAA.

The active-site Nucleophile is Ser-111. His-136 is a catalytic residue.

Belongs to the peptidase S14 family. As to quaternary structure, fourteen ClpP subunits assemble into 2 heptameric rings which stack back to back to give a disk-like structure with a central cavity, resembling the structure of eukaryotic proteasomes.

Its subcellular location is the cytoplasm. It carries out the reaction Hydrolysis of proteins to small peptides in the presence of ATP and magnesium. alpha-casein is the usual test substrate. In the absence of ATP, only oligopeptides shorter than five residues are hydrolyzed (such as succinyl-Leu-Tyr-|-NHMec, and Leu-Tyr-Leu-|-Tyr-Trp, in which cleavage of the -Tyr-|-Leu- and -Tyr-|-Trp bonds also occurs).. In terms of biological role, cleaves peptides in various proteins in a process that requires ATP hydrolysis. Has a chymotrypsin-like activity. Plays a major role in the degradation of misfolded proteins. The protein is ATP-dependent Clp protease proteolytic subunit of Dechloromonas aromatica (strain RCB).